The primary structure comprises 302 residues: Probable alpha-L-glutamate ligase (302 aa).

An ATP-grasp domain is found at Met-104–Glu-287. ATP-binding positions include Lys-141, Glu-178–Phe-179, Asp-187, and Arg-211–Asn-213. 3 residues coordinate Mg(2+): Asp-248, Glu-260, and Asn-262. 3 residues coordinate Mn(2+): Asp-248, Glu-260, and Asn-262.

This sequence belongs to the RimK family. Mg(2+) serves as cofactor. Requires Mn(2+) as cofactor.

The chain is Probable alpha-L-glutamate ligase from Psychromonas ingrahamii (strain DSM 17664 / CCUG 51855 / 37).